A 510-amino-acid chain; its full sequence is Probable inorganic carbon transporter subunit DabB (510 aa).

The next 14 helical transmembrane spans lie at 9–29 (TLLTLFFIALSASWLSGLLFL), 37–57 (FVHIHIGIAALPSLVSLLALV), 68–88 (WHLDTLAWLMAFFVLTIGLII), 105–122 (YFALFTFTTGVSSVAWLS), 125–145 (LRFMIMCWGATLIGLVLLIGL), 158–178 (ISGYLFTISWIALLSAIIWLF), 204–224 (TGINLLIIVAVMIPAAQWPFQ), 226–246 (WLIESAVAPTPVSAIMHAGLV), 266–286 (QIILLIFSSISVLIGTGISLV), 303–323 (GFMLIQCALGAYLAAVIHLIL), 355–375 (LWMIVGRVLGLFIAIAFWFIT), 382–402 (LVSALILGWSLYFSWKQLVVF), 410–430 (IAGLIVLIGFSLIYFTVHNSL), and 446–466 (APAVIFVICILLFSSVICTFV).

It belongs to the inorganic carbon transporter (TC 9.A.2) DabB family. Forms a complex with DabA.

The protein localises to the cell membrane. Functionally, part of an energy-coupled inorganic carbon pump. Expression of both dabA and dabB (DA2) restores growth in ambient air to E.coli deleted of its carbonic anhydrase genes (called CAfree, deletion of 'can' and 'cynT'). The protein is Probable inorganic carbon transporter subunit DabB of Bacillus anthracis.